A 496-amino-acid chain; its full sequence is 3-octaprenyl-4-hydroxybenzoate carboxy-lyase (496 aa).

Asn-181 lines the Mn(2+) pocket. Prenylated FMN-binding positions include 184–186 (IYR), 198–200 (RWL), and 203–204 (RG). A Mn(2+)-binding site is contributed by Glu-247. The Proton donor role is filled by Asp-296.

Belongs to the UbiD family. As to quaternary structure, homohexamer. The cofactor is prenylated FMN. Mn(2+) serves as cofactor.

Its subcellular location is the cell membrane. It carries out the reaction a 4-hydroxy-3-(all-trans-polyprenyl)benzoate + H(+) = a 2-(all-trans-polyprenyl)phenol + CO2. Its pathway is cofactor biosynthesis; ubiquinone biosynthesis. Its function is as follows. Catalyzes the decarboxylation of 3-octaprenyl-4-hydroxy benzoate to 2-octaprenylphenol, an intermediate step in ubiquinone biosynthesis. This chain is 3-octaprenyl-4-hydroxybenzoate carboxy-lyase, found in Aromatoleum aromaticum (strain DSM 19018 / LMG 30748 / EbN1) (Azoarcus sp. (strain EbN1)).